Here is a 621-residue protein sequence, read N- to C-terminus: MSFETAKYPTLALASTVQELRLLPKESLPTLCDELRQYLLDSVSRSSGHFASGLGVVELTVALHYVYNTPFDHLIWDVGHQAYPHKILTGRRDRIGTIRQKNGLHPFPWRDESEYDVLNVGHSSTSISAGLGMAVAAGKEAQGRRTACVIGDGAITAGMAFEAMNHAGDCKADLLVVLNDNEMSISENVGALNNRLAQILSGKTYSRLRESGKKVLDGLPPIKELVKRTEEHLKGMVVPGTLFEELGFNYIGPVDGHDVLALVHTLRNMRALKGPQFLHVMTKKGKGYAPAEKDPISWHAVPKFDPASGLLPKSAEGLPSYSKIFGQWLSETAAADDRLMAVTPAMREGSGMVSFSRDYPQQYFDVAIAEQHAVTFAAGLAIGGYKPVVAIYSTFLQRAYDQLIHDVAIQKLPVLFAIDRGGIVGADGQTHQGAFDIAFLRCIPDMVIMTPSDENECRQMLYTGYHHQGGPSAVRYPRGNGTGAPLEALASLPLGKGVVKRRGEKMAILNFGTLLPQAAEVAEAINATLVDMRFVKPLDEALVLELAAQHQSLITLEEGSIKGGAGSGVNELLMAKRRAIPVLNIGLPDEFIPPGTQDEIRSDYQLDADGIQRQIADWLAQ.

Residues His80 and 121-123 each bind thiamine diphosphate; that span reads GHS. Asp152 contacts Mg(2+). Thiamine diphosphate-binding positions include 153 to 154, Asn181, Tyr288, and Glu370; that span reads GA. Asn181 contributes to the Mg(2+) binding site.

This sequence belongs to the transketolase family. DXPS subfamily. In terms of assembly, homodimer. It depends on Mg(2+) as a cofactor. The cofactor is thiamine diphosphate.

The enzyme catalyses D-glyceraldehyde 3-phosphate + pyruvate + H(+) = 1-deoxy-D-xylulose 5-phosphate + CO2. Its pathway is metabolic intermediate biosynthesis; 1-deoxy-D-xylulose 5-phosphate biosynthesis; 1-deoxy-D-xylulose 5-phosphate from D-glyceraldehyde 3-phosphate and pyruvate: step 1/1. Catalyzes the acyloin condensation reaction between C atoms 2 and 3 of pyruvate and glyceraldehyde 3-phosphate to yield 1-deoxy-D-xylulose-5-phosphate (DXP). The protein is 1-deoxy-D-xylulose-5-phosphate synthase of Erwinia tasmaniensis (strain DSM 17950 / CFBP 7177 / CIP 109463 / NCPPB 4357 / Et1/99).